A 237-amino-acid chain; its full sequence is Sulfhydrogenase 2 subunit delta (237 aa).

[4Fe-4S] cluster is bound by residues Cys11, Cys14, Cys83, Cys132, Cys160, Cys163, Cys170, and Cys179. Residues Cys188, Cys192, Cys199, and Cys202 each coordinate [3Fe-4S] cluster.

This sequence belongs to the [NiFe]/[NiFeSe] hydrogenase small subunit family. In terms of assembly, dimer of heterotetramer of alpha, beta, gamma and delta subunits. The nickel-containing alpha and delta subunits constitute the hydrogenase activity. The beta and gamma subunits (flavin-containing dimer) constitute the sulfur reductase activity. The cofactor is Ni(2+). It depends on [4Fe-4S] cluster as a cofactor. Requires [3Fe-4S] cluster as cofactor.

The protein localises to the cytoplasm. It catalyses the reaction H2 + NADP(+) = NADPH + H(+). The catalysed reaction is H2 + NAD(+) = NADH + H(+). Functionally, part of a bifunctional enzyme complex that functions as a hydrogen-evolving hydrogenase with sulfur-reducing activity. May play a role in hydrogen cycling during fermentative growth. Activity exhibited with NAD in addition to NADPH. The alpha and delta subunits form the hydrogenase component that catalyzes the reduction of protons to evolve hydrogen. This Pyrococcus furiosus (strain ATCC 43587 / DSM 3638 / JCM 8422 / Vc1) protein is Sulfhydrogenase 2 subunit delta.